Here is a 490-residue protein sequence, read N- to C-terminus: GTPase Der (490 aa).

EngA-type G domains are found at residues 3–166 and 203–376; these read PVVA…MEDL and IKLA…DSST. GTP is bound by residues 9–16, 56–60, 118–121, 209–216, 256–260, and 321–324; these read GRPNVGKS, DTGGI, NKTD, DTAGV, and NKWD. Residues 377–461 enclose the KH-like domain; it reads RRVGTSMLTR…PIRIQFKEGE (85 aa).

This sequence belongs to the TRAFAC class TrmE-Era-EngA-EngB-Septin-like GTPase superfamily. EngA (Der) GTPase family. In terms of assembly, associates with the 50S ribosomal subunit.

Functionally, GTPase that plays an essential role in the late steps of ribosome biogenesis. The chain is GTPase Der from Escherichia fergusonii (strain ATCC 35469 / DSM 13698 / CCUG 18766 / IAM 14443 / JCM 21226 / LMG 7866 / NBRC 102419 / NCTC 12128 / CDC 0568-73).